A 626-amino-acid polypeptide reads, in one-letter code: Serine/threonine-protein kinase ATG1a (626 aa).

Residues 10 to 268 (YALGPRIGSG…FREFFNHMFL (259 aa)) form the Protein kinase domain. ATP contacts are provided by residues 16-24 (IGSGSFAVV) and Lys-39. Asp-132 acts as the Proton acceptor in catalysis. A compositionally biased stretch (polar residues) spans 288–308 (KSLLPSAQPSTSTNRFKSSAE). The disordered stretch occupies residues 288–347 (KSLLPSAQPSTSTNRFKSSAENVHKHGSSSSASNSQISMPHTSFEKTRKDTEGQCSSNQS). Positions 315–325 (SSSSASNSQIS) are enriched in low complexity. Residues 330 to 339 (SFEKTRKDTE) show a composition bias toward basic and acidic residues. The short motif at 360–363 (YVLV) is the AIM (Atg8-family-interacting motif) element.

This sequence belongs to the protein kinase superfamily. Ser/Thr protein kinase family. In terms of assembly, interacts with ATG13A. Interacts with ATG8E. Binds to ATG8E on autophagic vesicles. Post-translationally, phosphorylated during nutrient starvation. Dephosphorylated in nutrient-rich conditions.

The protein localises to the cytoplasmic vesicle. It localises to the autophagosome. Serine/threonine protein kinase involved in autophagy in a nutritional condition-dependent manner. The ATG1-ATG13 protein kinase complex regulates downstream events required for autophagosome enclosure and/or vacuolar delivery. Becomes a target of autophagy under nutrient starvation. Connects autophagy to plant nutritional status. This Arabidopsis thaliana (Mouse-ear cress) protein is Serine/threonine-protein kinase ATG1a.